The chain runs to 232 residues: Putative N-acetylmannosamine-6-phosphate 2-epimerase (232 aa).

Belongs to the NanE family.

It catalyses the reaction an N-acyl-D-glucosamine 6-phosphate = an N-acyl-D-mannosamine 6-phosphate. Its pathway is amino-sugar metabolism; N-acetylneuraminate degradation; D-fructose 6-phosphate from N-acetylneuraminate: step 3/5. Its function is as follows. Converts N-acetylmannosamine-6-phosphate (ManNAc-6-P) to N-acetylglucosamine-6-phosphate (GlcNAc-6-P). In Corynebacterium glutamicum (strain R), this protein is Putative N-acetylmannosamine-6-phosphate 2-epimerase.